We begin with the raw amino-acid sequence, 461 residues long: Argininosuccinate lyase (461 aa).

This sequence belongs to the lyase 1 family. Argininosuccinate lyase subfamily.

It is found in the cytoplasm. The catalysed reaction is 2-(N(omega)-L-arginino)succinate = fumarate + L-arginine. The protein operates within amino-acid biosynthesis; L-arginine biosynthesis; L-arginine from L-ornithine and carbamoyl phosphate: step 3/3. The sequence is that of Argininosuccinate lyase from Nitrosomonas eutropha (strain DSM 101675 / C91 / Nm57).